Reading from the N-terminus, the 382-residue chain is Kelch domain-containing protein 3 (382 aa).

5 Kelch repeats span residues 25-77 (RVYS…PYMR), 88-138 (TVFL…VLGK), 139-189 (TMYI…TMLG), 191-249 (HMYV…GYNG), and 251-301 (LYIF…IVGD).

As to quaternary structure, component of a CRL2(KLHDC3) complex, also named ECS(KLHDC3) complex, composed of CUL2, Elongin BC (ELOB and ELOC), RBX1 and substrate-specific adapter KLHDC3. May form oligomers as a KLHDC3-ELOB-ELOC complex; this interaction is likely autoinhibitory for the E3 ligase complex.

It localises to the cytoplasm. It functions in the pathway protein modification; protein ubiquitination. Functionally, substrate-recognition component of a Cul2-RING (CRL2) E3 ubiquitin-protein ligase complex of the DesCEND (destruction via C-end degrons) pathway, which recognizes a C-degron located at the extreme C terminus of target proteins, leading to their ubiquitination and degradation. The C-degron recognized by the DesCEND pathway is usually a motif of less than ten residues and can be present in full-length proteins, truncated proteins or proteolytically cleaved forms. The CRL2(KLHDC3) complex specifically recognizes proteins with a glycine (Gly) at the C-terminus, leading to their ubiquitination and degradation: recognizes the C-terminal -Arg-(Xaa)n-Arg-Gly, -Arg-(Xaa)n-Lys-Gly, and -Arg-(Xaa)n-Gln-Gly degrons. The CRL2(KLHDC3) complex mediates ubiquitination and degradation of truncated SELENOV and SEPHS2 selenoproteins produced by failed UGA/Sec decoding, which end with a glycine. May be involved in meiotic recombination process. The sequence is that of Kelch domain-containing protein 3 from Bos taurus (Bovine).